The chain runs to 424 residues: Glutamate-1-semialdehyde 2,1-aminomutase (424 aa).

Position 263 is an N6-(pyridoxal phosphate)lysine (Lys263).

It belongs to the class-III pyridoxal-phosphate-dependent aminotransferase family. HemL subfamily. As to quaternary structure, homodimer. Pyridoxal 5'-phosphate is required as a cofactor.

It is found in the cytoplasm. The catalysed reaction is (S)-4-amino-5-oxopentanoate = 5-aminolevulinate. It functions in the pathway porphyrin-containing compound metabolism; protoporphyrin-IX biosynthesis; 5-aminolevulinate from L-glutamyl-tRNA(Glu): step 2/2. The sequence is that of Glutamate-1-semialdehyde 2,1-aminomutase from Campylobacter jejuni subsp. jejuni serotype O:6 (strain 81116 / NCTC 11828).